Here is a 203-residue protein sequence, read N- to C-terminus: Large ribosomal subunit protein bL25 (203 aa).

The protein belongs to the bacterial ribosomal protein bL25 family. CTC subfamily. Part of the 50S ribosomal subunit; part of the 5S rRNA/L5/L18/L25 subcomplex. Contacts the 5S rRNA. Binds to the 5S rRNA independently of L5 and L18.

Its function is as follows. This is one of the proteins that binds to the 5S RNA in the ribosome where it forms part of the central protuberance. The sequence is that of Large ribosomal subunit protein bL25 from Rickettsia conorii (strain ATCC VR-613 / Malish 7).